A 272-amino-acid polypeptide reads, in one-letter code: 4-hydroxy-tetrahydrodipicolinate reductase (272 aa).

NAD(+) is bound by residues 10-15, E36, 100-102, and 124-127; these read GAGGRM, GTT, and SGNM. Catalysis depends on H157, which acts as the Proton donor/acceptor. Residue H158 participates in (S)-2,3,4,5-tetrahydrodipicolinate binding. The Proton donor role is filled by K161. 167-168 provides a ligand contact to (S)-2,3,4,5-tetrahydrodipicolinate; it reads GT.

Belongs to the DapB family.

Its subcellular location is the cytoplasm. The enzyme catalyses (S)-2,3,4,5-tetrahydrodipicolinate + NAD(+) + H2O = (2S,4S)-4-hydroxy-2,3,4,5-tetrahydrodipicolinate + NADH + H(+). The catalysed reaction is (S)-2,3,4,5-tetrahydrodipicolinate + NADP(+) + H2O = (2S,4S)-4-hydroxy-2,3,4,5-tetrahydrodipicolinate + NADPH + H(+). It participates in amino-acid biosynthesis; L-lysine biosynthesis via DAP pathway; (S)-tetrahydrodipicolinate from L-aspartate: step 4/4. Its function is as follows. Catalyzes the conversion of 4-hydroxy-tetrahydrodipicolinate (HTPA) to tetrahydrodipicolinate. This chain is 4-hydroxy-tetrahydrodipicolinate reductase, found in Bradyrhizobium sp. (strain ORS 278).